The following is a 1995-amino-acid chain: Myosin-14 (1995 aa).

The segment at 1-46 is disordered; the sequence is MAAVTMSVPGRKAPPRPGPVPEAAQPFLFTPRGPSAGGGPGSGTSP. The residue at position 2 (Ala2) is an N-acetylalanine. A Myosin N-terminal SH3-like domain is found at 51 to 101; that stretch reads TARRLVWVPSELHGFEAAALRDEGEEEAEVELAESGRRLRLPRDQIQRMNP. Ser60 carries the phosphoserine modification. The Myosin motor domain maps to 105 to 800; the sequence is SKAEDMAELT…VLAQLEEERD (696 aa). 198–205 provides a ligand contact to ATP; sequence GESGAGKT. Positions 678-700 are actin-binding; it reads LSRLMATLSNTNPSFVRCIVPNH. The 30-residue stretch at 803-832 folds into the IQ domain; the sequence is VTDIIVSFQAAARGYLARRAFQKRQQQQSA. A coiled-coil region spans residues 862-1947; that stretch reads LQVTRQDEVL…VTTLRNRLRR (1086 aa). Thr1194 bears the Phosphothreonine mark. 4 disordered regions span residues 1371 to 1415, 1592 to 1623, 1905 to 1942, and 1958 to 1995; these read EEAA…RRAA, QHERDLQGRDEAGEERRRQLAKQLRDAEVERD, EAEEEASRAQAGRRRLQRELEDVTESAESMNREVTTLR, and RQVFRLEEGVASDEEAEEAQPGSGPSPEPEGSPPAHPQ. Positions 1930-1942 are enriched in polar residues; sequence SAESMNREVTTLR. A phosphoserine mark is found at Ser1969, Ser1980, Ser1983, and Ser1989. Residues 1981–1995 are compositionally biased toward pro residues; the sequence is GPSPEPEGSPPAHPQ.

It belongs to the TRAFAC class myosin-kinesin ATPase superfamily. Myosin family. In terms of assembly, myosin is a hexameric protein that consists of 2 heavy chain subunits (MHC), 2 alkali light chain subunits (MLC) and 2 regulatory light chain subunits (MLC-2). As to expression, high levels of expression are found in brain (highest in corpus callosum), heart, kidney, liver, lung, small intestine, colon and skeletal muscle. Expression is low in organs composed mainly of smooth muscle, such as aorta, uterus and urinary bladder. No detectable expression is found in thymus, spleen, placenta and lymphocytes.

Cellular myosin that appears to play a role in cytokinesis, cell shape, and specialized functions such as secretion and capping. The chain is Myosin-14 (MYH14) from Homo sapiens (Human).